Reading from the N-terminus, the 943-residue chain is Protein translocase subunit SecA (943 aa).

Residues glutamine 90, 108–112 (GEGKT), and aspartate 509 contribute to the ATP site. The tract at residues 534–561 (KPDNEHKPPIPQQRNSKSGGGFSANVDS) is disordered.

Belongs to the SecA family. As to quaternary structure, monomer and homodimer. Part of the essential Sec protein translocation apparatus which comprises SecA, SecYEG and auxiliary proteins SecDF. Other proteins may also be involved.

Its subcellular location is the cell inner membrane. It localises to the cellular thylakoid membrane. The protein resides in the cytoplasm. It catalyses the reaction ATP + H2O + cellular proteinSide 1 = ADP + phosphate + cellular proteinSide 2.. Part of the Sec protein translocase complex. Interacts with the SecYEG preprotein conducting channel. Has a central role in coupling the hydrolysis of ATP to the transfer of proteins into and across the cell membrane, serving as an ATP-driven molecular motor driving the stepwise translocation of polypeptide chains across the membrane. Its function is as follows. Probably participates in protein translocation into and across both the cytoplasmic and thylakoid membranes in cyanobacterial cells. This is Protein translocase subunit SecA from Prochlorococcus marinus subsp. pastoris (strain CCMP1986 / NIES-2087 / MED4).